Here is a 354-residue protein sequence, read N- to C-terminus: MDDNKKKALAAALGQIERQFGKGAVMRMGDHDRQAIPAISTGSLGLDIALGIGGLPKGRIVEIYGPESSGKTTLTLSVIAQAQKMGATCAFVDAEHALDPEYAGKLGVNVDDLLVSQPDTGEQALEITDMLVRSNAIDVIVVDSVAALVPKAEIEGEMGDMHVGLQARLMSQALRKITGNIKNANCLVIFINQIRMKIGVMFGSPETTTGGNALKFYASVRLDIRRTGAVKEGDEVVGSETRVKVVKNKVAPPFRQAEFQILYGKGIYLNGEIVDLAVLHGFVEKSGAWYSYQGSKIGQGKANSAKFLADNPEICKALEKQIRDKLLTPGVDTKAVGSREAAVADDMAEADADI.

ATP is bound at residue 65–72 (GPESSGKT).

The protein belongs to the RecA family.

Its subcellular location is the cytoplasm. Functionally, can catalyze the hydrolysis of ATP in the presence of single-stranded DNA, the ATP-dependent uptake of single-stranded DNA by duplex DNA, and the ATP-dependent hybridization of homologous single-stranded DNAs. It interacts with LexA causing its activation and leading to its autocatalytic cleavage. This Pseudomonas savastanoi pv. phaseolicola (strain 1448A / Race 6) (Pseudomonas syringae pv. phaseolicola (strain 1448A / Race 6)) protein is Protein RecA.